The sequence spans 567 residues: TGF-beta receptor type-2 (567 aa).

The N-terminal stretch at 1 to 22 (MGRGLLRGLWPLHIVLWTRIAS) is a signal peptide. Residues 23–166 (TIPPHVQKSV…NPDLLLVIFQ (144 aa)) lie on the Extracellular side of the membrane. Disulfide bonds link Cys51–Cys84, Cys54–Cys71, Cys61–Cys67, Cys77–Cys101, Cys121–Cys136, and Cys138–Cys143. Asn70 and Asn94 each carry an N-linked (GlcNAc...) asparagine glycan. Asn154 carries N-linked (GlcNAc...) asparagine glycosylation. A helical membrane pass occupies residues 167-187 (VTGISLLPPLGVAISVIIIFY). Residues 188-567 (CYRVNRQQKL…PEDGSLNTTK (380 aa)) lie on the Cytoplasmic side of the membrane. In terms of domain architecture, Protein kinase spans 244–544 (IELDTLVGKG…AERFSELEHL (301 aa)). ATP contacts are provided by residues 250-258 (VGKGRFAEV) and Lys277. Asp379 (proton acceptor) is an active-site residue. 3 positions are modified to phosphoserine: Ser409, Ser548, and Ser553. The tract at residues 439-567 (VESFKQTDVY…PEDGSLNTTK (129 aa)) is sufficient for interaction with CLU.

The protein belongs to the protein kinase superfamily. TKL Ser/Thr protein kinase family. TGFB receptor subfamily. As to quaternary structure, homodimer. Heterohexamer; TGFB1, TGFB2 and TGFB3 homodimeric ligands assemble a functional receptor composed of two TGFBR1 and TGFBR2 heterodimers to form a ligand-receptor heterohexamer. The respective affinity of TGFRB1 and TGFRB2 for the ligands may modulate the kinetics of assembly of the receptor and may explain the different biological activities of TGFB1, TGFB2 and TGFB3. Component of a complex composed of TSC22D1 (via N-terminus), TGFBR1 and TGFBR2; the interaction between TSC22D1 and TGFBR1 is inhibited by SMAD7 and promoted by TGFB1. Interacts with DAXX. Interacts with DYNLT4. Interacts with ZFYVE9; ZFYVE9 recruits SMAD2 and SMAD3 to the TGF-beta receptor. Interacts with and is activated by SCUBE3; this interaction does not affect TGFB1-binding to TGFBR2. Interacts with VPS39; this interaction is independent of the receptor kinase activity and of the presence of TGF-beta. Interacts with CLU. Homodimer; disulfide-linked. The cofactor is Mg(2+). Mn(2+) serves as cofactor. In terms of processing, phosphorylated on a Ser/Thr residue in the cytoplasmic domain.

It is found in the cell membrane. The protein localises to the membrane raft. It localises to the secreted. It carries out the reaction L-threonyl-[receptor-protein] + ATP = O-phospho-L-threonyl-[receptor-protein] + ADP + H(+). It catalyses the reaction L-seryl-[receptor-protein] + ATP = O-phospho-L-seryl-[receptor-protein] + ADP + H(+). In terms of biological role, transmembrane serine/threonine kinase forming with the TGF-beta type I serine/threonine kinase receptor, TGFBR1, the non-promiscuous receptor for the TGF-beta cytokines TGFB1, TGFB2 and TGFB3. Transduces the TGFB1, TGFB2 and TGFB3 signal from the cell surface to the cytoplasm and thus regulates a plethora of physiological and pathological processes including cell cycle arrest in epithelial and hematopoietic cells, control of mesenchymal cell proliferation and differentiation, wound healing, extracellular matrix production, immunosuppression and carcinogenesis. The formation of the receptor complex composed of 2 TGFBR1 and 2 TGFBR2 molecules symmetrically bound to the cytokine dimer results in the phosphorylation and activation of TGFBR1 by the constitutively active TGFBR2. Activated TGFBR1 phosphorylates SMAD2 which dissociates from the receptor and interacts with SMAD4. The SMAD2-SMAD4 complex is subsequently translocated to the nucleus where it modulates the transcription of the TGF-beta-regulated genes. This constitutes the canonical SMAD-dependent TGF-beta signaling cascade. Also involved in non-canonical, SMAD-independent TGF-beta signaling pathways. Has transforming growth factor beta-activated receptor activity. Its function is as follows. Binds TGFB1, TGFB2 and TGFB3 in the picomolar affinity range without the participation of additional receptors. Blocks activation of SMAD2 and SMAD3 by TGFB1. The sequence is that of TGF-beta receptor type-2 (TGFBR2) from Homo sapiens (Human).